The primary structure comprises 396 residues: Phosphoglycerate kinase (396 aa).

Residues 21–23, arginine 36, 59–62, arginine 118, and arginine 151 each bind substrate; these read DFN and HFDR. ATP-binding positions include lysine 201, glutamate 323, and 353–356; that span reads GGDT.

It belongs to the phosphoglycerate kinase family. In terms of assembly, monomer.

It is found in the cytoplasm. The catalysed reaction is (2R)-3-phosphoglycerate + ATP = (2R)-3-phospho-glyceroyl phosphate + ADP. It participates in carbohydrate degradation; glycolysis; pyruvate from D-glyceraldehyde 3-phosphate: step 2/5. The protein is Phosphoglycerate kinase of Caulobacter vibrioides (strain ATCC 19089 / CIP 103742 / CB 15) (Caulobacter crescentus).